Consider the following 182-residue polypeptide: ATP-dependent protease subunit HslV (182 aa).

Residue threonine 10 is part of the active site. Na(+) is bound by residues alanine 166, cysteine 169, and serine 172.

It belongs to the peptidase T1B family. HslV subfamily. A double ring-shaped homohexamer of HslV is capped on each side by a ring-shaped HslU homohexamer. The assembly of the HslU/HslV complex is dependent on binding of ATP.

It localises to the cytoplasm. It catalyses the reaction ATP-dependent cleavage of peptide bonds with broad specificity.. Allosterically activated by HslU binding. Its function is as follows. Protease subunit of a proteasome-like degradation complex believed to be a general protein degrading machinery. This is ATP-dependent protease subunit HslV from Rickettsia typhi (strain ATCC VR-144 / Wilmington).